The primary structure comprises 284 residues: RNase adapter protein RapZ (284 aa).

8–15 (GRSGSGKS) provides a ligand contact to ATP. Residue 56–59 (DVRN) coordinates GTP. The tract at residues 266–284 (RSRGKNVQSRHRTLEKRKS) is RNA-binding.

Belongs to the RapZ-like family. RapZ subfamily. Homotrimer.

Functionally, modulates the synthesis of GlmS, by affecting the processing and stability of the regulatory small RNA GlmZ. When glucosamine-6-phosphate (GlcN6P) concentrations are high in the cell, RapZ binds GlmZ and targets it to cleavage by RNase E. Consequently, GlmZ is inactivated and unable to activate GlmS synthesis. Under low GlcN6P concentrations, RapZ is sequestered and inactivated by an other regulatory small RNA, GlmY, preventing GlmZ degradation and leading to synthesis of GlmS. The chain is RNase adapter protein RapZ from Cronobacter sakazakii (strain ATCC BAA-894) (Enterobacter sakazakii).